Reading from the N-terminus, the 631-residue chain is Phosphomethylpyrimidine synthase (631 aa).

Substrate contacts are provided by residues N239, M268, Y297, H333, 353-355, 394-397, and E433; these read SRG and DGLR. H437 contacts Zn(2+). Y460 provides a ligand contact to substrate. Residue H501 coordinates Zn(2+). Residues C581, C584, and C589 each contribute to the [4Fe-4S] cluster site.

It belongs to the ThiC family. As to quaternary structure, homodimer. The cofactor is [4Fe-4S] cluster.

It carries out the reaction 5-amino-1-(5-phospho-beta-D-ribosyl)imidazole + S-adenosyl-L-methionine = 4-amino-2-methyl-5-(phosphooxymethyl)pyrimidine + CO + 5'-deoxyadenosine + formate + L-methionine + 3 H(+). It participates in cofactor biosynthesis; thiamine diphosphate biosynthesis. In terms of biological role, catalyzes the synthesis of the hydroxymethylpyrimidine phosphate (HMP-P) moiety of thiamine from aminoimidazole ribotide (AIR) in a radical S-adenosyl-L-methionine (SAM)-dependent reaction. This chain is Phosphomethylpyrimidine synthase, found in Escherichia coli (strain SMS-3-5 / SECEC).